The chain runs to 423 residues: MTDLLSRAHADALDAADPLRSLRDAFVFPQHGDRDQTYLVGNSLGLQPRAARAMVDEVLDQWGTLGVEGHFTGPTQWLTYHQLVRDALARVVGAQPGEVVAMNTLSVNLHLMMASFYRPTHERGAILIEAGAFPSDRHAVESQLRLRGLDPATHLIEVEADEPNGTLSMAAIADAIAQHGPRLALVLWPGIQYRTGQAFDLAEIVRLARAQGAAVGCDLAHAVGNIPLTLHDDGVDFAVWCNYKYLNAGPGAVGGCFVHERHANSDLPRIAGWWGHEQQTRFRMDPQFVPSPGAEGWQLSNPPVLALAPLRASLTLFDQAGMAALRAKSERLTGHLEQLIRARVPQVLQIVTPAEPMHRGCQLSLRVAGGRAQGRSLFEHLHAAGVLGDWREPDVIRIAPVPLYNRFSDLHTFVGQVEAWAAA.

Pyridoxal 5'-phosphate-binding positions include L105, S106, 133–136 (FPSD), D218, H221, and Y243. The residue at position 244 (K244) is an N6-(pyridoxal phosphate)lysine. W273 and N301 together coordinate pyridoxal 5'-phosphate.

It belongs to the kynureninase family. In terms of assembly, homodimer. It depends on pyridoxal 5'-phosphate as a cofactor.

The enzyme catalyses L-kynurenine + H2O = anthranilate + L-alanine + H(+). The catalysed reaction is 3-hydroxy-L-kynurenine + H2O = 3-hydroxyanthranilate + L-alanine + H(+). It participates in amino-acid degradation; L-kynurenine degradation; L-alanine and anthranilate from L-kynurenine: step 1/1. The protein operates within cofactor biosynthesis; NAD(+) biosynthesis; quinolinate from L-kynurenine: step 2/3. Functionally, catalyzes the cleavage of L-kynurenine (L-Kyn) and L-3-hydroxykynurenine (L-3OHKyn) into anthranilic acid (AA) and 3-hydroxyanthranilic acid (3-OHAA), respectively. The sequence is that of Kynureninase from Xanthomonas oryzae pv. oryzae (strain KACC10331 / KXO85).